The chain runs to 555 residues: CTP synthase (555 aa).

An amidoligase domain region spans residues 1–271 (MVKRGKKTKY…DDKLAELFNI (271 aa)). Ser19 serves as a coordination point for CTP. Ser19 is a binding site for UTP. Residues 20–25 (SLGKGL) and Asp77 each bind ATP. Mg(2+) is bound by residues Asp77 and Glu145. Residues 152–154 (DIE), 192–197 (KTKPTQ), and Lys228 contribute to the CTP site. UTP contacts are provided by residues 192–197 (KTKPTQ) and Lys228. The Glutamine amidotransferase type-1 domain maps to 297–537 (RIGIVGKYVE…VKAALEHRDA (241 aa)). Residue Gly358 coordinates L-glutamine. The Nucleophile; for glutamine hydrolysis role is filled by Cys385. Residues 386–389 (LGLQ), Glu409, and Arg466 contribute to the L-glutamine site. Active-site residues include His510 and Glu512. The interval 535–555 (RDAQQRQPPAEVKKLAVGKNG) is disordered.

The protein belongs to the CTP synthase family. Homotetramer.

It catalyses the reaction UTP + L-glutamine + ATP + H2O = CTP + L-glutamate + ADP + phosphate + 2 H(+). The enzyme catalyses L-glutamine + H2O = L-glutamate + NH4(+). The catalysed reaction is UTP + NH4(+) + ATP = CTP + ADP + phosphate + 2 H(+). The protein operates within pyrimidine metabolism; CTP biosynthesis via de novo pathway; CTP from UDP: step 2/2. With respect to regulation, allosterically activated by GTP, when glutamine is the substrate; GTP has no effect on the reaction when ammonia is the substrate. The allosteric effector GTP functions by stabilizing the protein conformation that binds the tetrahedral intermediate(s) formed during glutamine hydrolysis. Inhibited by the product CTP, via allosteric rather than competitive inhibition. Its function is as follows. Catalyzes the ATP-dependent amination of UTP to CTP with either L-glutamine or ammonia as the source of nitrogen. Regulates intracellular CTP levels through interactions with the four ribonucleotide triphosphates. In Anaeromyxobacter sp. (strain K), this protein is CTP synthase.